Here is a 208-residue protein sequence, read N- to C-terminus: 2-phospho-L-lactate guanylyltransferase (208 aa).

The protein belongs to the CofC family. As to quaternary structure, homodimer.

It catalyses the reaction (2S)-2-phospholactate + GTP + H(+) = (2S)-lactyl-2-diphospho-5'-guanosine + diphosphate. The protein operates within cofactor biosynthesis; coenzyme F420 biosynthesis. Its function is as follows. Guanylyltransferase that catalyzes the activation of (2S)-2-phospholactate (2-PL) as (2S)-lactyl-2-diphospho-5'-guanosine, via the condensation of 2-PL with GTP. It is involved in the biosynthesis of coenzyme F420, a hydride carrier cofactor. The polypeptide is 2-phospho-L-lactate guanylyltransferase (Methanosarcina barkeri (strain Fusaro / DSM 804)).